Consider the following 415-residue polypeptide: Histidine--tRNA ligase (415 aa).

This sequence belongs to the class-II aminoacyl-tRNA synthetase family. As to quaternary structure, homodimer.

The protein resides in the cytoplasm. It catalyses the reaction tRNA(His) + L-histidine + ATP = L-histidyl-tRNA(His) + AMP + diphosphate + H(+). This Phytoplasma australiense protein is Histidine--tRNA ligase.